The chain runs to 527 residues: Catalase (527 aa).

Over residues methionine 1–glutamine 22 the composition is skewed to basic and acidic residues. The tract at residues methionine 1–glycine 32 is disordered. Residue alanine 2 is modified to N-acetylalanine. Serine 9 carries the post-translational modification Phosphoserine. N6-succinyllysine is present on lysine 13. Active-site residues include histidine 75 and asparagine 148. NADP(+)-binding residues include histidine 194, serine 201, arginine 203, and asparagine 213. An N6-succinyllysine modification is found at lysine 221. An N6-acetyllysine modification is found at lysine 233. 4 residues coordinate NADP(+): lysine 237, tryptophan 303, histidine 305, and lysine 306. N6-acetyllysine; alternate is present on lysine 306. Lysine 306 is modified (N6-succinyllysine; alternate). Residue tyrosine 358 participates in heme binding. The residue at position 434 (serine 434) is a Phosphoserine. Position 480 is an N6-acetyllysine; alternate (lysine 480). N6-succinyllysine; alternate is present on lysine 480. Position 499 is an N6-acetyllysine (lysine 499). The residue at position 511 (threonine 511) is a Phosphothreonine. Serine 517 carries the phosphoserine modification. The residue at position 522 (lysine 522) is an N6-succinyllysine. Residues lysine 524–leucine 527 carry the Microbody targeting signal; atypical motif.

It belongs to the catalase family. As to quaternary structure, homotetramer. Interacts (via microbody targeting signal) with PEX5, monomeric form interacts with PEX5, leading to its translocation into peroxisomes. Heme is required as a cofactor. Requires NADP(+) as cofactor.

It localises to the peroxisome matrix. The catalysed reaction is 2 H2O2 = O2 + 2 H2O. Its function is as follows. Catalyzes the degradation of hydrogen peroxide (H(2)O(2)) generated by peroxisomal oxidases to water and oxygen, thereby protecting cells from the toxic effects of hydrogen peroxide. Promotes growth of cells including T-cells, B-cells, myeloid leukemia cells, melanoma cells, mastocytoma cells and normal and transformed fibroblast cells. In Cavia porcellus (Guinea pig), this protein is Catalase (CAT).